The chain runs to 121 residues: Small ribosomal subunit protein uS10 (121 aa).

The tract at residues 1–20 is disordered; it reads MTEQKAKSSKTSSEEAKKQK.

This sequence belongs to the universal ribosomal protein uS10 family. Part of the 30S ribosomal subunit.

Its function is as follows. Involved in the binding of tRNA to the ribosomes. This is Small ribosomal subunit protein uS10 from Mycoplasmoides gallisepticum (strain R(low / passage 15 / clone 2)) (Mycoplasma gallisepticum).